Reading from the N-terminus, the 964-residue chain is DNA polymerase (964 aa).

This sequence belongs to the DNA polymerase type-B family.

It catalyses the reaction DNA(n) + a 2'-deoxyribonucleoside 5'-triphosphate = DNA(n+1) + diphosphate. In terms of biological role, catalyzes DNA synthesis. This chain is DNA polymerase (POL), found in Choristoneura biennis entomopoxvirus (CbEPV).